Here is a 568-residue protein sequence, read N- to C-terminus: Proline--tRNA ligase (568 aa).

It belongs to the class-II aminoacyl-tRNA synthetase family. ProS type 1 subfamily. Homodimer.

Its subcellular location is the cytoplasm. The enzyme catalyses tRNA(Pro) + L-proline + ATP = L-prolyl-tRNA(Pro) + AMP + diphosphate. Catalyzes the attachment of proline to tRNA(Pro) in a two-step reaction: proline is first activated by ATP to form Pro-AMP and then transferred to the acceptor end of tRNA(Pro). As ProRS can inadvertently accommodate and process non-cognate amino acids such as alanine and cysteine, to avoid such errors it has two additional distinct editing activities against alanine. One activity is designated as 'pretransfer' editing and involves the tRNA(Pro)-independent hydrolysis of activated Ala-AMP. The other activity is designated 'posttransfer' editing and involves deacylation of mischarged Ala-tRNA(Pro). The misacylated Cys-tRNA(Pro) is not edited by ProRS. The chain is Proline--tRNA ligase from Alkalilimnicola ehrlichii (strain ATCC BAA-1101 / DSM 17681 / MLHE-1).